The following is a 508-amino-acid chain: Glycerol kinase (508 aa).

Residue T14 coordinates ADP. 3 residues coordinate ATP: T14, T15, and S16. A sn-glycerol 3-phosphate-binding site is contributed by T14. Residue R18 participates in ADP binding. Sn-glycerol 3-phosphate is bound by residues R84, E85, and Y136. 3 residues coordinate glycerol: R84, E85, and Y136. The residue at position 232 (H232) is a Phosphohistidine; by HPr. D246 serves as a coordination point for sn-glycerol 3-phosphate. Residues D246 and Q247 each coordinate glycerol. ADP is bound by residues T268 and G311. Residues T268, G311, Q315, and G412 each contribute to the ATP site. ADP contacts are provided by G412 and N416.

Belongs to the FGGY kinase family. In terms of assembly, homotetramer and homodimer (in equilibrium). In terms of processing, the phosphoenolpyruvate-dependent sugar phosphotransferase system (PTS), including enzyme I, and histidine-containing protein (HPr) are required for the phosphorylation, which leads to the activation of the enzyme.

It catalyses the reaction glycerol + ATP = sn-glycerol 3-phosphate + ADP + H(+). Its pathway is polyol metabolism; glycerol degradation via glycerol kinase pathway; sn-glycerol 3-phosphate from glycerol: step 1/1. With respect to regulation, activated by phosphorylation and inhibited by fructose 1,6-bisphosphate (FBP). Functionally, key enzyme in the regulation of glycerol uptake and metabolism. Catalyzes the phosphorylation of glycerol to yield sn-glycerol 3-phosphate. This is Glycerol kinase from Streptococcus pyogenes serotype M28 (strain MGAS6180).